A 341-amino-acid chain; its full sequence is Anthranilate phosphoribosyltransferase (341 aa).

5-phospho-alpha-D-ribose 1-diphosphate contacts are provided by residues Gly-81, 84 to 85, Ser-89, 91 to 94, 109 to 117, and Ser-121; these read GD, NIST, and KHGNRSASS. Gly-81 is an anthranilate binding site. Ser-93 contributes to the Mg(2+) binding site. Asn-112 serves as a coordination point for anthranilate. Arg-167 is an anthranilate binding site. Mg(2+)-binding residues include Asp-225 and Glu-226.

This sequence belongs to the anthranilate phosphoribosyltransferase family. In terms of assembly, homodimer. The cofactor is Mg(2+).

The enzyme catalyses N-(5-phospho-beta-D-ribosyl)anthranilate + diphosphate = 5-phospho-alpha-D-ribose 1-diphosphate + anthranilate. It functions in the pathway amino-acid biosynthesis; L-tryptophan biosynthesis; L-tryptophan from chorismate: step 2/5. Functionally, catalyzes the transfer of the phosphoribosyl group of 5-phosphorylribose-1-pyrophosphate (PRPP) to anthranilate to yield N-(5'-phosphoribosyl)-anthranilate (PRA). This chain is Anthranilate phosphoribosyltransferase, found in Nocardioides sp. (strain ATCC BAA-499 / JS614).